The sequence spans 317 residues: Thymidylate synthase (317 aa).

DUMP is bound by residues R40 and R167–R168. Catalysis depends on C187, which acts as the Nucleophile. Residues R216–D219, N227, and H257–Y259 contribute to the dUMP site. A (6R)-5,10-methylene-5,6,7,8-tetrahydrofolate-binding site is contributed by D219.

This sequence belongs to the thymidylate synthase family. In terms of assembly, homodimer.

It carries out the reaction dUMP + (6R)-5,10-methylene-5,6,7,8-tetrahydrofolate = 7,8-dihydrofolate + dTMP. The protein operates within pyrimidine metabolism; dTTP biosynthesis. The chain is Thymidylate synthase (TMP1) from Cryptococcus neoformans var. neoformans serotype D (strain B-3501A) (Filobasidiella neoformans).